A 96-amino-acid polypeptide reads, in one-letter code: Co-chaperonin GroES (96 aa).

This sequence belongs to the GroES chaperonin family. In terms of assembly, heptamer of 7 subunits arranged in a ring. Interacts with the chaperonin GroEL.

It is found in the cytoplasm. Its function is as follows. Together with the chaperonin GroEL, plays an essential role in assisting protein folding. The GroEL-GroES system forms a nano-cage that allows encapsulation of the non-native substrate proteins and provides a physical environment optimized to promote and accelerate protein folding. GroES binds to the apical surface of the GroEL ring, thereby capping the opening of the GroEL channel. The protein is Co-chaperonin GroES of Colwellia maris.